A 143-amino-acid polypeptide reads, in one-letter code: Large ribosomal subunit protein uL11 (143 aa).

Belongs to the universal ribosomal protein uL11 family. As to quaternary structure, part of the ribosomal stalk of the 50S ribosomal subunit. Interacts with L10 and the large rRNA to form the base of the stalk. L10 forms an elongated spine to which L12 dimers bind in a sequential fashion forming a multimeric L10(L12)X complex. In terms of processing, one or more lysine residues are methylated.

In terms of biological role, forms part of the ribosomal stalk which helps the ribosome interact with GTP-bound translation factors. The polypeptide is Large ribosomal subunit protein uL11 (Borrelia garinii subsp. bavariensis (strain ATCC BAA-2496 / DSM 23469 / PBi) (Borreliella bavariensis)).